Reading from the N-terminus, the 432-residue chain is Transcriptional adapter 3-B (432 aa).

Disordered regions lie at residues 90 to 124 (HELG…PKSR) and 275 to 315 (SPVE…KSLE). Residues 293-305 (DGASTSPRSQNKP) show a composition bias toward polar residues. Residues 335–398 (ADDSEDEVLA…NEVMDAFRKI (64 aa)) are a coiled coil.

It belongs to the NGG1 family.

It is found in the nucleus. Functions as a component of the PCAF complex. The PCAF complex is capable of efficiently acetylating histones in a nucleosomal context. In Xenopus laevis (African clawed frog), this protein is Transcriptional adapter 3-B (tada3-b).